A 68-amino-acid chain; its full sequence is Purkinje cell protein 4-like protein 1 (68 aa).

The segment covering 1–16 (MSELNTKTSPATNQAA) has biased composition (polar residues). The tract at residues 1-45 (MSELNTKTSPATNQAAGQEEKGKAGNVKKAEEEEEIDIDLTAPET) is disordered. T8 is subject to Phosphothreonine. Over residues 18 to 31 (QEEKGKAGNVKKAE) the composition is skewed to basic and acidic residues. Residues 45 to 68 (TEKAALAIQGKFRRFQKRKKDPSS) enclose the IQ domain.

It belongs to the PCP4 family.

In Homo sapiens (Human), this protein is Purkinje cell protein 4-like protein 1 (PCP4L1).